The following is a 138-amino-acid chain: Large ribosomal subunit protein uL16 (138 aa).

A compositionally biased stretch (basic residues) spans 1-16 (MLIPKRVKYRRQHRPT). A disordered region spans residues 1–23 (MLIPKRVKYRRQHRPTRSGISKG).

Belongs to the universal ribosomal protein uL16 family. In terms of assembly, part of the 50S ribosomal subunit.

Its function is as follows. Binds 23S rRNA and is also seen to make contacts with the A and possibly P site tRNAs. This chain is Large ribosomal subunit protein uL16, found in Corynebacterium glutamicum (strain R).